We begin with the raw amino-acid sequence, 289 residues long: Elongation factor Ts (289 aa).

Positions 82–85 (TDFL) are involved in Mg(2+) ion dislocation from EF-Tu.

The protein belongs to the EF-Ts family.

The protein resides in the cytoplasm. In terms of biological role, associates with the EF-Tu.GDP complex and induces the exchange of GDP to GTP. It remains bound to the aminoacyl-tRNA.EF-Tu.GTP complex up to the GTP hydrolysis stage on the ribosome. This Azotobacter vinelandii (strain DJ / ATCC BAA-1303) protein is Elongation factor Ts.